The following is a 166-amino-acid chain: Eukaryotic translation initiation factor 5A (166 aa).

The residue at position 52 (Lys-52) is a Hypusine. The segment at 99 to 125 is disordered; sequence DREDPSKPAHLSLMDDEGETRDNLDMP.

Belongs to the eIF-5A family. Post-translationally, lys-52 undergoes hypusination, a unique post-translational modification that consists in the addition of a butylamino group from spermidine to lysine side chain, leading to the formation of the unusual amino acid hypusine. eIF-5As are the only known proteins to undergo this modification, which is essential for their function. Hypusination is mediated by the consecutive action of deoxyhypusine synthase DHSc and deoxyhypusine hydroxylase DOHH.

The protein localises to the cytoplasm. Its function is as follows. Translation factor that promotes translation elongation and termination, particularly upon ribosome stalling at specific amino acid sequence contexts. Binds between the exit (E) and peptidyl (P) site of the ribosome and promotes rescue of stalled ribosome: specifically required for efficient translation of polyproline-containing peptides as well as other motifs that stall the ribosome. Acts as a ribosome quality control (RQC) cofactor by joining the RQC complex to facilitate peptidyl transfer during CAT tailing step. Required for cell growth during both bloodstream (BF) and insect procyclic (PF) life cycle stages and for survival of the bloodstream form. This Trypanosoma brucei brucei (strain 927/4 GUTat10.1) protein is Eukaryotic translation initiation factor 5A.